Reading from the N-terminus, the 385-residue chain is Putative glutamate--cysteine ligase 2 (385 aa).

Belongs to the glutamate--cysteine ligase type 2 family. YbdK subfamily.

The enzyme catalyses L-cysteine + L-glutamate + ATP = gamma-L-glutamyl-L-cysteine + ADP + phosphate + H(+). Functionally, ATP-dependent carboxylate-amine ligase which exhibits weak glutamate--cysteine ligase activity. This Herpetosiphon aurantiacus (strain ATCC 23779 / DSM 785 / 114-95) protein is Putative glutamate--cysteine ligase 2.